The following is a 127-amino-acid chain: Protein HI_1253 (127 aa).

A run of 4 helical transmembrane segments spans residues valine 13–isoleucine 33, leucine 61–valine 81, alanine 82–valine 102, and serine 107–lysine 127.

It belongs to the SirB2 family.

It is found in the cell inner membrane. The polypeptide is Protein HI_1253 (Haemophilus influenzae (strain ATCC 51907 / DSM 11121 / KW20 / Rd)).